The primary structure comprises 165 residues: Protein NKG7 (165 aa).

4 helical membrane passes run 9–29 (LLTSSLGLVSLLVAVSTNFWF), 61–81 (FCILAVLWGLISTAFLVMSCI), 92–112 (IVSTFMGFAGALSLIVAMTVY), and 133–153 (FYLGWVSTLLFLCTGGLSLGA).

Belongs to the PMP-22/EMP/MP20 family.

The protein localises to the cell membrane. The protein resides in the cytolytic granule membrane. Its function is as follows. Regulates cytotoxic granule exocytosis in effector lymphocytes, thus acting as a critical mediator of inflammation in a broad range of infectious and non-infectious diseases. Essential for cytotoxic degranulation of natural killer (NK) cells and CD8(+) T-cells and for the activation of CD4(+) T-cells following infection. Plays a critical role in CD8(+) T-cell and NK cell-mediated cytolysis of target cells and contributes to the cytolytic activity via the perforin/granzyme pathway by enhancing exocytosis of LAMP1-carrying lytic granules. Contributes to NK cell-mediated control of cancer metastasis. This chain is Protein NKG7 (NKG7), found in Bos taurus (Bovine).